The following is a 118-amino-acid chain: Beta-2-microglobulin (118 aa).

A signal peptide spans Met-1–Ala-20. Positions Pro-25–Ile-111 constitute an Ig-like C1-type domain. A disulfide bridge connects residues Cys-45 and Cys-99.

It belongs to the beta-2-microglobulin family. As to quaternary structure, heterodimer of an alpha chain and a beta chain. Beta-2-microglobulin is the beta-chain of major histocompatibility complex class I molecules.

The protein resides in the secreted. Component of the class I major histocompatibility complex (MHC). Involved in the presentation of peptide antigens to the immune system. This Equus asinus (Donkey) protein is Beta-2-microglobulin (B2M).